The chain runs to 427 residues: Light-independent protochlorophyllide reductase subunit N (427 aa).

3 residues coordinate [4Fe-4S] cluster: cysteine 30, cysteine 55, and cysteine 116.

The protein belongs to the BchN/ChlN family. Protochlorophyllide reductase is composed of three subunits; BchL, BchN and BchB. Forms a heterotetramer of two BchB and two BchN subunits. The cofactor is [4Fe-4S] cluster.

The enzyme catalyses chlorophyllide a + oxidized 2[4Fe-4S]-[ferredoxin] + 2 ADP + 2 phosphate = protochlorophyllide a + reduced 2[4Fe-4S]-[ferredoxin] + 2 ATP + 2 H2O. The protein operates within porphyrin-containing compound metabolism; bacteriochlorophyll biosynthesis (light-independent). Its function is as follows. Component of the dark-operative protochlorophyllide reductase (DPOR) that uses Mg-ATP and reduced ferredoxin to reduce ring D of protochlorophyllide (Pchlide) to form chlorophyllide a (Chlide). This reaction is light-independent. The NB-protein (BchN-BchB) is the catalytic component of the complex. This is Light-independent protochlorophyllide reductase subunit N from Rhodopseudomonas palustris (strain BisA53).